An 81-amino-acid polypeptide reads, in one-letter code: RNA-binding protein Hfq (81 aa).

Positions 10–69 (DPFLNTLRREHVPVSIYLVNGIKLQGQIESFDQYVVLLRNTVTQMVYKHAISTIVPGRAV) constitute a Sm domain.

Belongs to the Hfq family. In terms of assembly, homohexamer.

Its function is as follows. RNA chaperone that binds small regulatory RNA (sRNAs) and mRNAs to facilitate mRNA translational regulation in response to envelope stress, environmental stress and changes in metabolite concentrations. Also binds with high specificity to tRNAs. The sequence is that of RNA-binding protein Hfq from Variovorax paradoxus (strain S110).